Here is a 524-residue protein sequence, read N- to C-terminus: MSAEVEYLQHEDYLYRTIKLKEIRELGINPYPYQYADCVEVQEIRNRVVDNELGDSEAAFRKETPKVRFAGRLVLFRSMGKNAFGQILDRDAKIQVMFNRDFSQVAGLPADSEISSIKFIEKKLDLGDILGIDGYLFFTHSGELTVLVETVTLLCKSLISLPDKHSGLADKEIRYRKRWADLISSEEVRKTFLARSRILKLIREYMDQQDFLEVETPVLQTIYGGAEATPFVTTLKALHTEMFLRISLEIALKKILVGGMSRVYEIGKVFRNEGIDRTHNPEFTMIEAYAAYWDYNDVMKCVENLVEYVVRALNNGETKVQYSHLKSGPQIVDFKAPWIRMTMKESISVYGGVDVDQYSEHELRDILKTRTALPEKAYVSATRGEMIALLFDELVCDKLIAPHHITDHPLETTPLCKTLRSGDETLVERFESFCLGKELCNAYSELNDPLQQRKLLEEQMRKKALNPDSEYHPIDEEFLEALCQGMPPAGGFGIGIDRLVMMLTDAASIRDVLYFPVMRRIESK.

Residues glutamate 431 and glutamate 438 each contribute to the Mg(2+) site.

It belongs to the class-II aminoacyl-tRNA synthetase family. Homodimer. Requires Mg(2+) as cofactor.

Its subcellular location is the cytoplasm. It catalyses the reaction tRNA(Lys) + L-lysine + ATP = L-lysyl-tRNA(Lys) + AMP + diphosphate. This chain is Lysine--tRNA ligase (lysS), found in Chlamydia muridarum (strain MoPn / Nigg).